The following is a 156-amino-acid chain: Glutamate-rich protein 2 (156 aa).

2 disordered regions span residues 29 to 66 (LQDIDDKLSESAEDDGEDDTNDEDDDEDSNPKKNTQAP) and 116 to 156 (EKTQ…EDGS). Acidic residues-rich tracts occupy residues 39–56 (SAEDDGEDDTNDEDDDED) and 140–156 (SDEELSDESSDEGEDGS).

The chain is Glutamate-rich protein 2 (ERICH2) from Homo sapiens (Human).